Reading from the N-terminus, the 362-residue chain is MGYLSCKAGSAVAIAVSSAASTSGSTSSKASAPPESPIEDRPRLRRFLHRDLESATGGFDINNLLGRGSHGSVYKAVIGSRHIAVKRPSKSREISREFHNEFEILSRIRSPRFVNLLGFSADNSKEPLLVVEFMGNGSLYDVIHSDTVLNSGAISSWSKRIKIALQIAKAVHLLHSQETPIIHRDIKSANVLMDKNLNAKLGDFGLAIRCNVDDQKVKSTPPAGTMGYLDPDYVTADRLSTKTDVFSFGILLLEIISGRKAIDVRYSPSFIVDWAIPMIKRGKIGGIYDPRIGPPIDVSVRNHLGLVAAKCVRTCREKRPGMEEVVGWLTGLTKSVRSRRWDELSIGNPCMMVETVGGRPVE.

The signal sequence occupies residues 1-24; sequence MGYLSCKAGSAVAIAVSSAASTSG. Over residues 21-32 the composition is skewed to low complexity; it reads STSGSTSSKASA. The tract at residues 21-43 is disordered; the sequence is STSGSTSSKASAPPESPIEDRPR. Residues 59–329 enclose the Protein kinase domain; sequence FDINNLLGRG…PGMEEVVGWL (271 aa). ATP contacts are provided by residues 65–73 and lysine 86; that span reads LGRGSHGSV. Asparagine 136 carries N-linked (GlcNAc...) asparagine glycosylation. The active-site Proton acceptor is the aspartate 185. A Phosphoserine modification is found at serine 219. Residues threonine 220 and threonine 225 each carry the phosphothreonine modification. Position 233 is a phosphotyrosine (tyrosine 233).

This sequence belongs to the protein kinase superfamily. Ser/Thr protein kinase family.

It localises to the secreted. It carries out the reaction L-seryl-[protein] + ATP = O-phospho-L-seryl-[protein] + ADP + H(+). The enzyme catalyses L-threonyl-[protein] + ATP = O-phospho-L-threonyl-[protein] + ADP + H(+). The chain is Serine/threonine-protein kinase-like protein At3g51990 from Arabidopsis thaliana (Mouse-ear cress).